Reading from the N-terminus, the 413-residue chain is Protein FAM8A1 (413 aa).

Positions Met-1–Gly-10 are enriched in basic and acidic residues. The segment at Met-1–Pro-105 is disordered. The segment covering Ala-49–Ala-64 has biased composition (low complexity). Basic and acidic residues predominate over residues Asp-65 to Glu-78. Residues Arg-107–Pro-139 form a necessary and sufficient to interact with SYVN1 region. Residues Pro-217–Gln-236 form a disordered region. Position 229 is a phosphoserine (Ser-229). The RDD domain maps to Val-242 to Lys-408. 3 consecutive transmembrane segments (helical) span residues Phe-257–Ile-277, Met-304–Trp-324, and Ala-371–Phe-391.

In terms of assembly, component of the HRD1 complex, which comprises at least SYNV1/HRD1, FAM8A1, HERPUD1/HERP, OS9, SEL1L and UBE2J1. This interaction stabilizes FAM8A1 protein, preventing its proteasomal degradation. FAM8A1 binding to SYNV1 may promote recruitment of HERPUD1 to the HRD1 complex. Ubiquitously expressed, with a higher level of expression in testis.

It localises to the membrane. Its function is as follows. Plays a role in the assembly of the HRD1 complex, a complex involved in the ubiquitin-proteasome-dependent process of ER-associated degradation (ERAD). The sequence is that of Protein FAM8A1 (FAM8A1) from Homo sapiens (Human).